Consider the following 195-residue polypeptide: HTH-type transcriptional regulator BetI (195 aa).

The region spanning 8-68 (SIRRRQLIDA…ATMRDITSQL (61 aa)) is the HTH tetR-type domain. Residues 31-50 (TIAQIARRAGVSTGIISHYF) constitute a DNA-binding region (H-T-H motif).

Its pathway is amine and polyamine biosynthesis; betaine biosynthesis via choline pathway [regulation]. Repressor involved in the biosynthesis of the osmoprotectant glycine betaine. It represses transcription of the choline transporter BetT and the genes of BetAB involved in the synthesis of glycine betaine. This is HTH-type transcriptional regulator BetI from Escherichia coli (strain UTI89 / UPEC).